The sequence spans 267 residues: 3-methyl-2-oxobutanoate hydroxymethyltransferase (267 aa).

Mg(2+) is bound by residues Asp45 and Asp84. Residues 45 to 46 (DS), Asp84, and Lys113 each bind 3-methyl-2-oxobutanoate. Glu115 serves as a coordination point for Mg(2+). The Proton acceptor role is filled by Glu182.

It belongs to the PanB family. Homodecamer; pentamer of dimers. Requires Mg(2+) as cofactor.

Its subcellular location is the cytoplasm. It catalyses the reaction 3-methyl-2-oxobutanoate + (6R)-5,10-methylene-5,6,7,8-tetrahydrofolate + H2O = 2-dehydropantoate + (6S)-5,6,7,8-tetrahydrofolate. Its pathway is cofactor biosynthesis; coenzyme A biosynthesis. Its function is as follows. Catalyzes the reversible reaction in which hydroxymethyl group from 5,10-methylenetetrahydrofolate is transferred onto alpha-ketoisovalerate to form ketopantoate. The polypeptide is 3-methyl-2-oxobutanoate hydroxymethyltransferase (Saccharolobus islandicus (strain Y.G.57.14 / Yellowstone #1) (Sulfolobus islandicus)).